A 443-amino-acid polypeptide reads, in one-letter code: Amino-acid acetyltransferase (443 aa).

The region spanning 296-434 (EQIRRATIND…KKLMYNYQRR (139 aa)) is the N-acetyltransferase domain.

The protein belongs to the acetyltransferase family. ArgA subfamily. In terms of assembly, homohexamer.

The protein localises to the cytoplasm. The catalysed reaction is L-glutamate + acetyl-CoA = N-acetyl-L-glutamate + CoA + H(+). It functions in the pathway amino-acid biosynthesis; L-arginine biosynthesis; N(2)-acetyl-L-ornithine from L-glutamate: step 1/4. This chain is Amino-acid acetyltransferase, found in Escherichia fergusonii (strain ATCC 35469 / DSM 13698 / CCUG 18766 / IAM 14443 / JCM 21226 / LMG 7866 / NBRC 102419 / NCTC 12128 / CDC 0568-73).